A 370-amino-acid polypeptide reads, in one-letter code: Putative transposase InsL for insertion sequence element IS186A (370 aa).

The protein belongs to the transposase 11 family.

Functionally, involved in the transposition of the insertion sequence IS186. The protein is Putative transposase InsL for insertion sequence element IS186A (insL1) of Escherichia coli (strain K12).